A 72-amino-acid chain; its full sequence is Thiostrepton (72 aa).

Positions 1 to 55 (MDATAIHERWSVMSNASIGQEIGVEGLTGLDVDALEISDYVDETLLDGEDLTVTM) are excised as a propeptide. Residues 56–67 (IASASCTTCICT) constitute a cross-link (4-(1-hydroxyethyl)-7-isoleucino-2-(threonin-O3-ylcarbonyl)-7,8-dihydroquinolin-8-ol (Ile-Thr)). Ser-58 carries the post-translational modification 2,3-didehydroalanine (Ser). A cross-link (thiazole-4-carboxylic acid (Ser-Cys)) is located at residues 60 to 61 (SC). The 5-amino-piperideine-2,5-dicarboxylic acid (Ser-Cys) (with S-69) cross-link spans 60–68 (SCTTCICTC). A cross-link (5-amino-piperideine-2,5-dicarboxylic acid (Ser-Ser) (with C-68)) is located at residues 60–69 (SCTTCICTCS). Thr-63 bears the (Z)-2,3-didehydrobutyrine mark. Positions 63-64 (TC) form a cross-link, (4S)-thiazoline-4-carboxylic acid (Thr-Cys). Ile-65 bears the (3S,4R)-3,4-dihydroxyisoleucine mark. Positions 65-66 (IC) form a cross-link, thiazole-4-carboxylic acid (Ile-Cys). The thiazole-4-carboxylic acid (Thr-Cys) cross-link spans 67–68 (TC). Positions 69-70 (SC) form a cross-link, thiazole-4-carboxylic acid (Ser-Cys). 2,3-didehydroalanine (Ser) is present on residues Ser-71 and Ser-72. Serine amide is present on Ser-72.

It belongs to the thiocillin family. Post-translationally, maturation of thiazole and oxazole containing antibiotics involves the enzymatic condensation of a Cys, Ser or Thr with the alpha-carbonyl of the preceding amino acid to form a thioether or ether bond, then dehydration to form a double bond with the alpha-amino nitrogen. Thiazoline or oxazoline ring are dehydrogenated to form thiazole or oxazole rings. Maturation of pyridinyl containing antibiotics involves the cross-linking of a Ser and a Cys-Ser pair usually separated by 7 or 8 residues along the peptide chain. The Ser residues are dehydrated to didehydroalanines, then bonded between their beta carbons. The alpha carbonyl of the Cys condenses with alpha carbon of the first Ser to form a pyridinyl ring. The ring may be multiply dehydrogenated to form a pyridine ring with loss of the amino nitrogen of the first Ser. In terms of processing, the amidation of Ser-72 probably does not occur by the same mechanism, oxidative cleavage of glycine, as in eukaryotes. Post-translationally, the structure of the 2,3-didehydrobutyrin is shown to be Z-isomer.

Its subcellular location is the secreted. Its function is as follows. Has bacteriocidal activity. Inhibits bacterial protein biosynthesis by acting on the elongation factor Tu (EF-Tu). The sequence is that of Thiostrepton (tpdA) from Streptomyces azureus.